The chain runs to 562 residues: NAD-dependent malic enzyme (562 aa).

The Proton donor role is filled by tyrosine 101. An NAD(+)-binding site is contributed by arginine 154. Lysine 172 serves as the catalytic Proton acceptor. A divalent metal cation contacts are provided by glutamate 243, aspartate 244, and aspartate 267. 2 residues coordinate NAD(+): aspartate 267 and asparagine 415.

The protein belongs to the malic enzymes family. In terms of assembly, homotetramer. The cofactor is Mg(2+). It depends on Mn(2+) as a cofactor.

It catalyses the reaction (S)-malate + NAD(+) = pyruvate + CO2 + NADH. The catalysed reaction is oxaloacetate + H(+) = pyruvate + CO2. This Shewanella oneidensis (strain ATCC 700550 / JCM 31522 / CIP 106686 / LMG 19005 / NCIMB 14063 / MR-1) protein is NAD-dependent malic enzyme.